The primary structure comprises 167 residues: Thioredoxin-like protein HI_1115 (167 aa).

Residues 10–27 (GLSLFLTFIVITSILDFV) traverse the membrane as a helical segment. The region spanning 30–167 (PVVPEEINKI…VRLFFAEFFG (138 aa)) is the Thioredoxin domain. A disulfide bridge links cysteine 69 with cysteine 72.

It belongs to the thioredoxin family.

Its subcellular location is the cell membrane. This Haemophilus influenzae (strain ATCC 51907 / DSM 11121 / KW20 / Rd) protein is Thioredoxin-like protein HI_1115.